Reading from the N-terminus, the 288-residue chain is Acetyl-coenzyme A carboxylase carboxyl transferase subunit beta, chloroplastic (288 aa).

The region spanning 30-288 is the CoA carboxyltransferase N-terminal domain; the sequence is LWIKCFDCGL…QILSLHNHSK (259 aa). Cys34, Cys37, Cys53, and Cys56 together coordinate Zn(2+). The C4-type zinc finger occupies 34-56; sequence CFDCGLLMYSKVLKRNLKVCPQC.

It belongs to the AccD/PCCB family. Acetyl-CoA carboxylase is a heterohexamer composed of biotin carboxyl carrier protein, biotin carboxylase and 2 subunits each of ACCase subunit alpha and ACCase plastid-coded subunit beta (accD). Zn(2+) serves as cofactor.

Its subcellular location is the plastid. It localises to the chloroplast stroma. It catalyses the reaction N(6)-carboxybiotinyl-L-lysyl-[protein] + acetyl-CoA = N(6)-biotinyl-L-lysyl-[protein] + malonyl-CoA. The protein operates within lipid metabolism; malonyl-CoA biosynthesis; malonyl-CoA from acetyl-CoA: step 1/1. In terms of biological role, component of the acetyl coenzyme A carboxylase (ACC) complex. Biotin carboxylase (BC) catalyzes the carboxylation of biotin on its carrier protein (BCCP) and then the CO(2) group is transferred by the transcarboxylase to acetyl-CoA to form malonyl-CoA. This Pyropia yezoensis (Susabi-nori) protein is Acetyl-coenzyme A carboxylase carboxyl transferase subunit beta, chloroplastic.